Reading from the N-terminus, the 376-residue chain is 5-hydroxytryptamine receptor 1D (376 aa).

The interval 1 to 22 is disordered; it reads MSPPNQSEEGLPQEASNRSLNA. Asn5, Asn17, and Asn21 each carry an N-linked (GlcNAc...) asparagine glycan. 3 helical membrane passes run 39-64, 76-97, and 110-134; these read VSLV…TTIL, LIGS…ISIA, and LCDI…VIAL. Cys111 and Cys188 are joined by a disulfide. Residues Asp118 and Cys122 each coordinate serotonin. The short motif at 135–137 is the DRY motif; important for ligand-induced conformation changes element; that stretch reads DRY. 4 helical membrane passes run 155–176, 195–218, 300–325, and 335–358; these read AGAM…PLFW, ISYT…ILYS, KTLG…VLPI, and ALFD…YTVF. Serotonin is bound at residue Ser320. The NPxxY motif; important for ligand-induced conformation changes and signaling motif lies at 351-355; that stretch reads NPIIY.

This sequence belongs to the G-protein coupled receptor 1 family. In terms of assembly, homodimer. Heterodimer with HTR1B.

Its subcellular location is the cell membrane. Its function is as follows. G-protein coupled receptor for 5-hydroxytryptamine (serotonin). Also functions as a receptor for ergot alkaloid derivatives, various anxiolytic and antidepressant drugs and other psychoactive substances. Ligand binding causes a conformation change that triggers signaling via guanine nucleotide-binding proteins (G proteins) and modulates the activity of downstream effectors, such as adenylate cyclase. HTR1D is coupled to G(i)/G(o) G alpha proteins and mediates inhibitory neurotransmission by inhibiting adenylate cyclase activity. Regulates the release of 5-hydroxytryptamine in the brain, and thereby affects neural activity. May also play a role in regulating the release of other neurotransmitters. May play a role in vasoconstriction. This Cavia porcellus (Guinea pig) protein is 5-hydroxytryptamine receptor 1D (HTR1D).